We begin with the raw amino-acid sequence, 313 residues long: Ketimine reductase mu-crystallin (313 aa).

R47 is a 3,3',5-triiodo-L-thyronine binding site. NADPH is bound by residues S90, H91, R118, A143, V145, Q146, N167, R168, T169, N172, T204, M205, and V225. E256 contributes to the 3,3',5-triiodo-L-thyronine binding site. S291 is an NADPH binding site.

Belongs to the ornithine cyclodeaminase/mu-crystallin family. Homodimer. Binds the thyroid hormone triiodothyronine (T3); T3 binding inhibits enzymatic activity. Expressed in the spiral ligament of the cochlea (at protein level).

The protein localises to the cytoplasm. It catalyses the reaction L-pipecolate + NADP(+) = Delta(1)-piperideine-2-carboxylate + NADPH + H(+). The catalysed reaction is L-pipecolate + NAD(+) = Delta(1)-piperideine-2-carboxylate + NADH + H(+). It carries out the reaction L-proline + NADP(+) = 1-pyrroline-2-carboxylate + NADPH + H(+). The enzyme catalyses L-proline + NAD(+) = 1-pyrroline-2-carboxylate + NADH + H(+). It catalyses the reaction (3R)-1,4-thiomorpholine-3-carboxylate + NAD(+) = 3,4-dehydrothiomorpholine-3-carboxylate + NADH + 2 H(+). The catalysed reaction is (3R)-1,4-thiomorpholine-3-carboxylate + NADP(+) = 3,4-dehydrothiomorpholine-3-carboxylate + NADPH + 2 H(+). It carries out the reaction (S)-cystathionine ketimine + NADH + 2 H(+) = (3R,5S)-2,3,5,6,7-pentahydro-1,4-thiazepine-3,5-dicarboxylate + NAD(+). The enzyme catalyses (S)-cystathionine ketimine + NADPH + 2 H(+) = (3R,5S)-2,3,5,6,7-pentahydro-1,4-thiazepine-3,5-dicarboxylate + NADP(+). It catalyses the reaction (R)-lanthionine ketimine + NADPH + 2 H(+) = (3R,5R)-1,4-thiomorpholine-3,5-dicarboxylate + NADP(+). The catalysed reaction is Delta(2)-thiazoline-2-carboxylate + NADPH + 2 H(+) = L-thiazolidine-2-carboxylate + NADP(+). Catalyzes the NAD(P)H-dependent reduction of imine double bonds of a number of cyclic ketimine substrates, including sulfur-containing cyclic ketimines. Under physiological conditions, it efficiently catalyzes delta(1)-piperideine-2-carboxylate (P2C) and delta(1)-pyrroline-2-carboxylate (Pyr2C) reduction, suggesting a central role in lysine and glutamate metabolism. Additional substrates are delta(2)-thiazoline-2-carboxylate (T2C), 3,4-dehydrothiomorpholine-3-carboxylate (AECK), and (R)-lanthionine ketimine (LK) that is reduced at very low rate compared to other substrates. Also catalyzes the NAD(P)H-dependent reduction of (S)-cystathionine ketimine (CysK). This Mus musculus (Mouse) protein is Ketimine reductase mu-crystallin.